Consider the following 347-residue polypeptide: S-adenosylmethionine:tRNA ribosyltransferase-isomerase (347 aa).

It belongs to the QueA family. In terms of assembly, monomer.

It is found in the cytoplasm. The enzyme catalyses 7-aminomethyl-7-carbaguanosine(34) in tRNA + S-adenosyl-L-methionine = epoxyqueuosine(34) in tRNA + adenine + L-methionine + 2 H(+). It functions in the pathway tRNA modification; tRNA-queuosine biosynthesis. Its function is as follows. Transfers and isomerizes the ribose moiety from AdoMet to the 7-aminomethyl group of 7-deazaguanine (preQ1-tRNA) to give epoxyqueuosine (oQ-tRNA). In Pseudomonas aeruginosa (strain LESB58), this protein is S-adenosylmethionine:tRNA ribosyltransferase-isomerase.